The chain runs to 158 residues: MVDVEGKYSPRLANKRGAARLAAVQALYQMDIVGSGVMETAAEYEAYRLGKDIDGDQYLDADFQWFLAIITGVVKDQKQLDPMLNQQLSAEWSLSRLDSILRAILRAGLWELINRQDVPIAVVMSEYVDIAKAFFEGDEPKLVNAILDSMAKKIRLLK.

It belongs to the NusB family.

Involved in transcription antitermination. Required for transcription of ribosomal RNA (rRNA) genes. Binds specifically to the boxA antiterminator sequence of the ribosomal RNA (rrn) operons. The protein is Transcription antitermination protein NusB of Bartonella henselae (strain ATCC 49882 / DSM 28221 / CCUG 30454 / Houston 1) (Rochalimaea henselae).